A 457-amino-acid polypeptide reads, in one-letter code: MDHLPIFCQLRDRDCLIVGGGDVAERKARLLLEAGARLTVNALTFIPQFTVWANEGMLTLVEGPFDETLLDSCWLAIAATDDDTVNQRVSDAAESRRIFCNVVDAPKAASFIMPSIIDRSPLMVAVSSGGTSPVLARLLREKLESLLPQHLGQVARYAGQLRARVKKQFATMGERRRFWEKFFVNDRLAQSLANADEKAVNATTERLFSEPLDHRGEVVLVGAGPGDAGLLTLKGLQQIQQADIVVYDRLVSDDIMNLVRRDADRVFVGKRAGYHCVPQEEINQILLREAQKGKRVVRLKGGDPFIFGRGGEELETLCHAGIPFSVVPGITAASGCSAYSGIPLTHRDYAQSVRLVTGHLKTGGELDWENLAAEKQTLVFYMGLNQAATIQEKLIAFGMQADMPVALVENGTSVKQRVVHGVLTQLGELAQQVESPALIIVGRVVGLRDKLNWFSNY.

The interval 1–204 is precorrin-2 dehydrogenase /sirohydrochlorin ferrochelatase; sequence MDHLPIFCQL…ADEKAVNATT (204 aa). Residues 22–23 and 43–44 each bind NAD(+); these read DV and LT. Residue Ser128 is modified to Phosphoserine. The tract at residues 216–457 is uroporphyrinogen-III C-methyltransferase; that stretch reads GEVVLVGAGP…RDKLNWFSNY (242 aa). Pro225 serves as a coordination point for S-adenosyl-L-methionine. The active-site Proton acceptor is the Asp248. The active-site Proton donor is Lys270. Residues 301–303, Ile306, 331–332, Met382, and Gly411 contribute to the S-adenosyl-L-methionine site; these read GGD and TA.

This sequence in the N-terminal section; belongs to the precorrin-2 dehydrogenase / sirohydrochlorin ferrochelatase family. In the C-terminal section; belongs to the precorrin methyltransferase family.

It carries out the reaction uroporphyrinogen III + 2 S-adenosyl-L-methionine = precorrin-2 + 2 S-adenosyl-L-homocysteine + H(+). The enzyme catalyses precorrin-2 + NAD(+) = sirohydrochlorin + NADH + 2 H(+). The catalysed reaction is siroheme + 2 H(+) = sirohydrochlorin + Fe(2+). Its pathway is cofactor biosynthesis; adenosylcobalamin biosynthesis; precorrin-2 from uroporphyrinogen III: step 1/1. It participates in cofactor biosynthesis; adenosylcobalamin biosynthesis; sirohydrochlorin from precorrin-2: step 1/1. It functions in the pathway porphyrin-containing compound metabolism; siroheme biosynthesis; precorrin-2 from uroporphyrinogen III: step 1/1. The protein operates within porphyrin-containing compound metabolism; siroheme biosynthesis; siroheme from sirohydrochlorin: step 1/1. Its pathway is porphyrin-containing compound metabolism; siroheme biosynthesis; sirohydrochlorin from precorrin-2: step 1/1. In terms of biological role, multifunctional enzyme that catalyzes the SAM-dependent methylations of uroporphyrinogen III at position C-2 and C-7 to form precorrin-2 via precorrin-1. Then it catalyzes the NAD-dependent ring dehydrogenation of precorrin-2 to yield sirohydrochlorin. Finally, it catalyzes the ferrochelation of sirohydrochlorin to yield siroheme. This chain is Siroheme synthase, found in Salmonella choleraesuis (strain SC-B67).